Reading from the N-terminus, the 1187-residue chain is uncharacterized protein (1187 aa).

Residues 38-57 (KNNQDIPTSNTNISPKPISQ) show a composition bias toward polar residues. Disordered regions lie at residues 38–127 (KNNQ…NSPT), 189–215 (ISRSSSSSSSSSSSSSGKSNENSIHLN), 248–287 (TQPPQPYPQQIQPPQEQLQQHQSQAPHSPLPQPQPPSQLQ), 358–415 (NNNS…NSNS), 443–490 (FPNN…INNN), 536–689 (QFPF…SSLN), 752–840 (SINN…NKSI), and 1079–1187 (HNNN…NLQK). Composition is skewed to low complexity over residues 71–84 (KPIVPSTSSTSTLI), 104–124 (PSSSSSSSSSSLSSSSTSIPN), 190–215 (SRSSSSSSSSSSSSSGKSNENSIHLN), and 248–274 (TQPPQPYPQQIQPPQEQLQQHQSQAPH). The segment covering 443-455 (FPNNTDENYPSDH) has biased composition (polar residues). Low complexity-rich tracts occupy residues 458 to 490 (NDNNNDKNNNTNNNIIINDDNNNNPNNNNINNN), 543 to 570 (TTESGFSSTSTTPSSTSVPSSLSNSSSA), 585 to 653 (INNL…SNIN), 662 to 689 (PNSPISNYSSMSSSSSPNSFTSSTSSLN), 752 to 790 (SINNNNNNDKNNDIDNSNENLTTTTTTTTTTTTTTTTNN), and 797 to 809 (NYKINNYNNNIDN). The segment covering 815–832 (NDDDNDDDDDDDVDDNDD) has biased composition (acidic residues). Composition is skewed to low complexity over residues 1079–1149 (HNNN…PSNN) and 1156–1174 (KNNNNNNNNNNNNNNNNTN).

This is an uncharacterized protein from Dictyostelium discoideum (Social amoeba).